A 148-amino-acid chain; its full sequence is Ubiquitin-conjugating enzyme E2 10 (148 aa).

The UBC core domain occupies 1–147; that stretch reads MASKRILKEL…ARSWTQKYAM (147 aa). Cys85 functions as the Glycyl thioester intermediate in the catalytic mechanism.

Belongs to the ubiquitin-conjugating enzyme family. Interacts with CHIP and the E3 ubiquitin ligase BB. Associates with the E3 ubiquitin ligase JMJ24. As to expression, ubiquitously expressed with the highest levels in rosette leaves, roots and petals.

The catalysed reaction is S-ubiquitinyl-[E1 ubiquitin-activating enzyme]-L-cysteine + [E2 ubiquitin-conjugating enzyme]-L-cysteine = [E1 ubiquitin-activating enzyme]-L-cysteine + S-ubiquitinyl-[E2 ubiquitin-conjugating enzyme]-L-cysteine.. It participates in protein modification; protein ubiquitination. Functionally, accepts the ubiquitin from the E1 complex and catalyzes its covalent attachment to other proteins. Mediates the selective degradation of short-lived and abnormal proteins. This Arabidopsis thaliana (Mouse-ear cress) protein is Ubiquitin-conjugating enzyme E2 10.